Consider the following 149-residue polypeptide: Prefoldin subunit alpha (149 aa).

It belongs to the prefoldin alpha subunit family. Heterohexamer of two alpha and four beta subunits.

It localises to the cytoplasm. Functionally, molecular chaperone capable of stabilizing a range of proteins. Seems to fulfill an ATP-independent, HSP70-like function in archaeal de novo protein folding. In Methanoculleus marisnigri (strain ATCC 35101 / DSM 1498 / JR1), this protein is Prefoldin subunit alpha.